The primary structure comprises 2556 residues: Ubiquitin carboxyl-terminal hydrolase 9Y (2556 aa).

The span at 1 to 33 (MTITTRGSPVGENESQGQTSDGQPQPSFQQNQI) shows a compositional bias: polar residues. The tract at residues 1–68 (MTITTRGSPV…QHEEEDPSFP (68 aa)) is disordered. The span at 34 to 44 (SSSDSSNETSP) shows a compositional bias: low complexity. Ser587 is subject to Phosphoserine. Phosphothreonine is present on Thr589. The segment at 971 to 999 (NMPSSPDSSSDSSAGPPGNHSHNNYRDVS) is disordered. A compositionally biased stretch (low complexity) spans 973–983 (PSSPDSSSDSS). The USP domain maps to 1559–1958 (VGLKNAGATC…NAYILFYERM (400 aa)). Residue Cys1568 is the Nucleophile of the active site. Zn(2+) is bound by residues Cys1729, His1731, Cys1773, and Cys1776. His1881 (proton acceptor) is an active-site residue. Ser2447 is modified (phosphoserine). Residues 2513–2556 (QNYVPEQPFSGPASHHLNNPQKNDKPQETHESNEEISSCLIKDQ) form a disordered region. The segment covering 2534–2545 (KNDKPQETHESN) has biased composition (basic and acidic residues). The residue at position 2549 (Ser2549) is a Phosphoserine.

The protein belongs to the peptidase C19 family.

It carries out the reaction Thiol-dependent hydrolysis of ester, thioester, amide, peptide and isopeptide bonds formed by the C-terminal Gly of ubiquitin (a 76-residue protein attached to proteins as an intracellular targeting signal).. It participates in protein modification; protein ubiquitination. In terms of biological role, deubiquitinase that mediates deubiquitination of target proteins. May stabilize target proteins that are important for male germ cell development. The protein is Ubiquitin carboxyl-terminal hydrolase 9Y of Mus musculus (Mouse).